We begin with the raw amino-acid sequence, 607 residues long: UvrABC system protein C (607 aa).

In terms of domain architecture, GIY-YIG spans 29 to 106; it reads DKPGVYLMKD…IKKHNPKYNI (78 aa). The UVR domain occupies 211-246; that stretch reads GAILKALEKKMKEASENLEFERAKEYRDLMEDLKKV.

Belongs to the UvrC family. As to quaternary structure, interacts with UvrB in an incision complex.

The protein localises to the cytoplasm. The UvrABC repair system catalyzes the recognition and processing of DNA lesions. UvrC both incises the 5' and 3' sides of the lesion. The N-terminal half is responsible for the 3' incision and the C-terminal half is responsible for the 5' incision. The polypeptide is UvrABC system protein C (Desulfitobacterium hafniense (strain Y51)).